The primary structure comprises 407 residues: Na(+)-translocating NADH-quinone reductase subunit F (407 aa).

The chain crosses the membrane as a helical span at residues 6–26 (IFLAIGMFTAIVLGLVAIILV). Residues 35-127 (GDVTIQINGE…DMQIRVPEEV (93 aa)) form the 2Fe-2S ferredoxin-type domain. Cys-70, Cys-76, Cys-79, and Cys-111 together coordinate [2Fe-2S] cluster. Positions 130-269 (VKKWECTVES…YGPFGEFFAK (140 aa)) constitute an FAD-binding FR-type domain. Positions 272-389 (EAEMVFIGGG…PMMNAAVIKM (118 aa)) are catalytic.

It belongs to the NqrF family. In terms of assembly, composed of six subunits; NqrA, NqrB, NqrC, NqrD, NqrE and NqrF. It depends on [2Fe-2S] cluster as a cofactor. Requires FAD as cofactor.

It localises to the cell inner membrane. It catalyses the reaction a ubiquinone + n Na(+)(in) + NADH + H(+) = a ubiquinol + n Na(+)(out) + NAD(+). NQR complex catalyzes the reduction of ubiquinone-1 to ubiquinol by two successive reactions, coupled with the transport of Na(+) ions from the cytoplasm to the periplasm. The first step is catalyzed by NqrF, which accepts electrons from NADH and reduces ubiquinone-1 to ubisemiquinone by a one-electron transfer pathway. This is Na(+)-translocating NADH-quinone reductase subunit F from Pseudomonas aeruginosa (strain ATCC 15692 / DSM 22644 / CIP 104116 / JCM 14847 / LMG 12228 / 1C / PRS 101 / PAO1).